A 434-amino-acid chain; its full sequence is Chaperone SurA (434 aa).

Residues 1–22 (MKHSKKIIFALLALAMSNTSMA) form the signal peptide. PpiC domains are found at residues 173-274 (DVEF…KVVD) and 283-383 (VEEV…QLES).

It localises to the periplasm. It catalyses the reaction [protein]-peptidylproline (omega=180) = [protein]-peptidylproline (omega=0). Its function is as follows. Chaperone involved in the correct folding and assembly of outer membrane proteins. Recognizes specific patterns of aromatic residues and the orientation of their side chains, which are found more frequently in integral outer membrane proteins. May act in both early periplasmic and late outer membrane-associated steps of protein maturation. In Shewanella frigidimarina (strain NCIMB 400), this protein is Chaperone SurA.